Consider the following 413-residue polypeptide: MAYEKLAVQDKAVLEGILAEKKRQQANIELIASENFVSEAVMEAQGSVLTNKYAEGYPGKRYYGGCEHVDVVEDIARDRVKEIFGAEYANVQPHSGAQANMAVYHTILEPGDTVLGMNLSHGGHLTHGSPVNFSGILYNFVEYGVTKDTQVIDYEDVRQKALEHKPKLIVAGASAYPREIDFSKFREIADEVGAYFMVDMAHIAGLVAVGEHQSPVPYADFVTSTTHKTLRGPRGGLILASKEWEQKLNKSVFPGIQGGPLMHVIAAKAVAFGEVLQPEFKDYAKQIKLNAKALAEVLIAEGVEIVSGGTDNHLLLLNVKSLGLTGKVAEHALDEVGITTNKNTIPYDTESPFVTSGIRIGTPAVTSRGFKEEDMKEVGAIIAAVLKNPEDEAVKADAKDRVKALTDKHPLYA.

(6S)-5,6,7,8-tetrahydrofolate-binding positions include leucine 119 and 123–125 (GHL). N6-(pyridoxal phosphate)lysine is present on lysine 228. A (6S)-5,6,7,8-tetrahydrofolate-binding site is contributed by 351-353 (SPF).

This sequence belongs to the SHMT family. Homodimer. Requires pyridoxal 5'-phosphate as cofactor.

Its subcellular location is the cytoplasm. It carries out the reaction (6R)-5,10-methylene-5,6,7,8-tetrahydrofolate + glycine + H2O = (6S)-5,6,7,8-tetrahydrofolate + L-serine. The protein operates within one-carbon metabolism; tetrahydrofolate interconversion. It functions in the pathway amino-acid biosynthesis; glycine biosynthesis; glycine from L-serine: step 1/1. Its function is as follows. Catalyzes the reversible interconversion of serine and glycine with tetrahydrofolate (THF) serving as the one-carbon carrier. This reaction serves as the major source of one-carbon groups required for the biosynthesis of purines, thymidylate, methionine, and other important biomolecules. Also exhibits THF-independent aldolase activity toward beta-hydroxyamino acids, producing glycine and aldehydes, via a retro-aldol mechanism. The protein is Serine hydroxymethyltransferase of Lysinibacillus sphaericus (strain C3-41).